We begin with the raw amino-acid sequence, 128 residues long: Large ribosomal subunit protein eL8 (128 aa).

The protein belongs to the eukaryotic ribosomal protein eL8 family. As to quaternary structure, part of the 50S ribosomal subunit. Probably part of the RNase P complex.

Its subcellular location is the cytoplasm. Functionally, multifunctional RNA-binding protein that recognizes the K-turn motif in ribosomal RNA, the RNA component of RNase P, box H/ACA, box C/D and box C'/D' sRNAs. This chain is Large ribosomal subunit protein eL8, found in Nitrosopumilus maritimus (strain SCM1).